Reading from the N-terminus, the 21-residue chain is Granule-bound starch synthase 1 (21 aa).

The protein belongs to the glycosyltransferase 1 family. Bacterial/plant glycogen synthase subfamily.

Its subcellular location is the plastid. The protein localises to the chloroplast. It is found in the amyloplast. The enzyme catalyses an NDP-alpha-D-glucose + [(1-&gt;4)-alpha-D-glucosyl](n) = [(1-&gt;4)-alpha-D-glucosyl](n+1) + a ribonucleoside 5'-diphosphate + H(+). The protein operates within glycan biosynthesis; starch biosynthesis. The polypeptide is Granule-bound starch synthase 1 (Secale cereale (Rye)).